A 150-amino-acid chain; its full sequence is Large ribosomal subunit protein bL9 (150 aa).

Belongs to the bacterial ribosomal protein bL9 family.

Functionally, binds to the 23S rRNA. This chain is Large ribosomal subunit protein bL9, found in Yersinia pseudotuberculosis serotype I (strain IP32953).